A 96-amino-acid polypeptide reads, in one-letter code: UPF0125 protein YfjF (96 aa).

This sequence belongs to the UPF0125 (RnfH) family.

This chain is UPF0125 protein YfjF (yfjF), found in Escherichia coli O157:H7.